The primary structure comprises 648 residues: Acetyl-coenzyme A synthetase (648 aa).

CoA contacts are provided by residues 191–194 (RGGR), T310, and N334. Residues 386 to 388 (GEP), 410 to 415 (DTWWQT), D499, and R514 each bind ATP. Residue S522 participates in CoA binding. R525 serves as a coordination point for ATP. Residues V536, H538, and I541 each coordinate Mg(2+). R583 is a binding site for CoA. An N6-acetyllysine modification is found at K608.

It belongs to the ATP-dependent AMP-binding enzyme family. Mg(2+) is required as a cofactor. In terms of processing, acetylated. Deacetylation by the SIR2-homolog deacetylase activates the enzyme.

It carries out the reaction acetate + ATP + CoA = acetyl-CoA + AMP + diphosphate. In terms of biological role, catalyzes the conversion of acetate into acetyl-CoA (AcCoA), an essential intermediate at the junction of anabolic and catabolic pathways. AcsA undergoes a two-step reaction. In the first half reaction, AcsA combines acetate with ATP to form acetyl-adenylate (AcAMP) intermediate. In the second half reaction, it can then transfer the acetyl group from AcAMP to the sulfhydryl group of CoA, forming the product AcCoA. The chain is Acetyl-coenzyme A synthetase from Aeromonas salmonicida (strain A449).